Reading from the N-terminus, the 304-residue chain is N-acetyl-D-glucosamine kinase (304 aa).

ATP contacts are provided by residues 4-11 (GFDMGGTK) and 133-140 (GLGGGLVI). Zn(2+)-binding residues include H157, C177, C179, and C184.

This sequence belongs to the ROK (NagC/XylR) family. NagK subfamily.

The catalysed reaction is N-acetyl-D-glucosamine + ATP = N-acetyl-D-glucosamine 6-phosphate + ADP + H(+). It functions in the pathway cell wall biogenesis; peptidoglycan recycling. In terms of biological role, catalyzes the phosphorylation of N-acetyl-D-glucosamine (GlcNAc) derived from cell-wall degradation, yielding GlcNAc-6-P. This chain is N-acetyl-D-glucosamine kinase, found in Pectobacterium atrosepticum (strain SCRI 1043 / ATCC BAA-672) (Erwinia carotovora subsp. atroseptica).